The sequence spans 367 residues: tRNA-specific 2-thiouridylase MnmA (367 aa).

Residues 7–14 and Met33 each bind ATP; that span reads AMSGGVDS. Cys108 (nucleophile) is an active-site residue. Cys108 and Cys200 are disulfide-bonded. Gly132 is a binding site for ATP. Residues 150–152 form an interaction with tRNA region; it reads KDQ. The active-site Cysteine persulfide intermediate is the Cys200. An interaction with tRNA region spans residues 301–302; sequence RY.

It belongs to the MnmA/TRMU family.

The protein resides in the cytoplasm. It carries out the reaction S-sulfanyl-L-cysteinyl-[protein] + uridine(34) in tRNA + AH2 + ATP = 2-thiouridine(34) in tRNA + L-cysteinyl-[protein] + A + AMP + diphosphate + H(+). Catalyzes the 2-thiolation of uridine at the wobble position (U34) of tRNA, leading to the formation of s(2)U34. This Thermus thermophilus (strain ATCC BAA-163 / DSM 7039 / HB27) protein is tRNA-specific 2-thiouridylase MnmA.